We begin with the raw amino-acid sequence, 1896 residues long: Obscurin-like protein 1 (1896 aa).

Serine 10 bears the Phosphoserine mark. In terms of domain architecture, Ig-like 1 spans 12–100; that stretch reads PCFLRFPRPV…GEAYAAAAVT (89 aa). Positions 17–19 are interaction with TTN; the sequence is FPR. A disulfide bridge links cysteine 33 with cysteine 84. The interaction with TTN stretch occupies residues 85 to 94; the sequence is RARNAAGEAY. Residues 106-127 are disordered; the sequence is ASDPELQPAERPLPSPGSGEGA. Ig-like domains are found at residues 128–225, 243–330, and 339–425; these read PVFL…ALLQ, PVVE…QTLS, and PRLR…ANVT. Intrachain disulfides connect cysteine 149/cysteine 209, cysteine 267/cysteine 319, and cysteine 362/cysteine 412. The Fibronectin type-III domain occupies 517 to 615; sequence PPGPPILAEM…FHGSAHLVPT (99 aa). 10 Ig-like domains span residues 714-800, 804-893, 902-982, 986-1075, 1078-1172, 1174-1261, 1265-1357, 1357-1534, 1628-1720, and 1794-1896; these read PVHI…FGVT, PPVH…VTIT, PSGK…FTVT, PPVR…VTVT, PERI…PPVQ, LALE…FTVQ, PPVR…VEEP, PLLV…ARLS, PVTI…RTVA, and PAQS…VEGN. 6 disulfides stabilise this stretch: cysteine 738-cysteine 788, cysteine 829-cysteine 879, cysteine 920-cysteine 970, cysteine 1011-cysteine 1061, cysteine 1103-cysteine 1153, and cysteine 1195-cysteine 1245. 2 disulfide bridges follow: cysteine 1381–cysteine 1522 and cysteine 1650–cysteine 1700.

As to quaternary structure, component of the 3M complex, composed of core components CUL7, CCDC8 and OBSL1. Interacts with CCDC8. Interacts with CUL7; the interaction is direct. Interacts with FBXW8. Interacts (via N-terminal Ig-like domain) with TTN/titin (via C-terminal Ig-like domain); the interaction is direct. In terms of tissue distribution, widely expressed, with predominant levels found in the heart.

It is found in the cytoplasm. The protein resides in the cytoskeleton. It localises to the microtubule organizing center. The protein localises to the centrosome. Its subcellular location is the perinuclear region. It is found in the golgi apparatus. Core component of the 3M complex, a complex required to regulate microtubule dynamics and genome integrity. It is unclear how the 3M complex regulates microtubules, it could act by controlling the level of a microtubule stabilizer. Acts as a regulator of the Cul7-RING(FBXW8) ubiquitin-protein ligase, playing a critical role in the ubiquitin ligase pathway that regulates Golgi morphogenesis and dendrite patterning in brain. Required to localize CUL7 to the Golgi apparatus in neurons. This is Obscurin-like protein 1 from Homo sapiens (Human).